Here is a 600-residue protein sequence, read N- to C-terminus: Cationic amino acid transporter 4, vacuolar (600 aa).

Residues 1-32 (MNSLVRRKQVDSVHLIKNDGPHQLAKKLSAVD) lie on the Cytoplasmic side of the membrane. A helical transmembrane segment spans residues 33–53 (LVAIGVGTTIGAGVYILVGTV). Topologically, residues 54-60 (AREHTGP) are vacuolar. The helical transmembrane segment at 61–81 (ALAVSFFIAGVAAALSACCYA) threads the bilayer. The Cytoplasmic segment spans residues 82–92 (ELASRCPSAGS). The helical transmembrane segment at 93–115 (AYHYAYICLGEGIAWLVGWALVL) threads the bilayer. The Vacuolar portion of the chain corresponds to 116-152 (DYTIGGSAIARGITPNLASFFGGLDNLPVFLARQTIP). A helical membrane pass occupies residues 153–173 (GVGIVVDPCAALLIMIVTILL). Residues 174 to 184 (CFGIKESSTVQ) are Cytoplasmic-facing. The chain crosses the membrane as a helical span at residues 185-205 (AIVTSVNVCTLVFIIVVGGYL). Residues 206 to 220 (ACKTGWVGYDLPSGY) lie on the Vacuolar side of the membrane. A helical membrane pass occupies residues 221–241 (FPFGLNGILAGSAVVFFSYIG). At 242–264 (FDTVTSTAEEVKNPQRDLPLGIG) the chain is on the cytoplasmic side. A helical membrane pass occupies residues 265–285 (IALLICCILYMLLSVVIVGLV). Residues 286-308 (PYYSLNPDTPISSAFGDSGMQWA) are Vacuolar-facing. The helical transmembrane segment at 309-329 (AYILTTGAITALCASLLGSLL) threads the bilayer. The Cytoplasmic segment spans residues 330–360 (AQPRIFMAMARDGLLPAFFSEISPRTQVPVK). A helical transmembrane segment spans residues 361-381 (STIAIGVLAAALAFFMDVAQL). Ser-382 is a topological domain (vacuolar). A helical membrane pass occupies residues 383–403 (EMVSVGTLMAFTAVAVCVLVL). Topologically, residues 404-462 (RYVPPDGVPLSSSSQTLSDTDESRAETENFLVDAIESSDSPLLGNETARDEKYFGKRRK) are cytoplasmic. Residues 463–483 (IAAWSIALVCIGVLGLASAAS) traverse the membrane as a helical segment. At 484–492 (AERLPSFPR) the chain is on the vacuolar side. The helical transmembrane segment at 493–513 (FTICGVSAVILLGSLITLGYI) threads the bilayer. The Cytoplasmic segment spans residues 514–528 (DEDEERHNFGHKGGF). The helical transmembrane segment at 529–549 (LCPFVPYLPVLCILINTYLII) threads the bilayer. A topological domain (vacuolar) is located at residue Asn-550. The helical transmembrane segment at 551-571 (IGAGTWIRVLIWLLIGSMIYI) threads the bilayer. Residues 572–600 (FYGRSHSLLNNAVYVPTMTCTRKTTDHLA) lie on the Cytoplasmic side of the membrane.

This sequence belongs to the amino acid-polyamine-organocation (APC) superfamily. Cationic amino acid transporter (CAT) (TC 2.A.3.3) family. As to expression, expressed in roots, stems, flowers, and leaves.

It is found in the vacuole membrane. Functionally, permease involved in the transport of the cationic amino acids. The chain is Cationic amino acid transporter 4, vacuolar (CAT4) from Arabidopsis thaliana (Mouse-ear cress).